The primary structure comprises 64 residues: Peptide Ctri9677 (64 aa).

Positions 1-22 (MKNNTILFTFLIVFLIASQIEA) are cleaved as a signal peptide. The residue at position 36 (L36) is a Leucine amide. A propeptide spanning residues 40–64 (SEDREFFDFFTDDNLAALEKALKEY) is cleaved from the precursor.

This sequence belongs to the non-disulfide-bridged peptide (NDBP) superfamily. Short antimicrobial peptide (group 4) family. Expressed by the venom gland.

It localises to the secreted. Its function is as follows. Antimicrobial peptide. This chain is Peptide Ctri9677, found in Chaerilus tricostatus (Scorpion).